The chain runs to 161 residues: Urease accessory protein UreE (161 aa).

The segment at 133 to 161 (EPEAGAYQSAPHSHSHAHDHPFVRLPAHS) is disordered.

Belongs to the UreE family.

The protein localises to the cytoplasm. In terms of biological role, involved in urease metallocenter assembly. Binds nickel. Probably functions as a nickel donor during metallocenter assembly. The polypeptide is Urease accessory protein UreE (Pseudomonas putida (strain W619)).